A 501-amino-acid chain; its full sequence is HMG-box protein STE11 (501 aa).

Residues 142-153 show a composition bias toward polar residues; the sequence is PVNMVGSLSGSP. Disordered stretches follow at residues 142-205 and 246-293; these read PVNM…KRPL and YAEM…SLEQ. Low complexity predominate over residues 192-204; sequence SRSGSSSSGIKRP. A DNA-binding region (HMG box) is located at residues 201–265; it reads IKRPLNSFML…RHAKEYPDYK (65 aa). The segment covering 246–263 has biased composition (basic and acidic residues); it reads YAEMAQRERERHAKEYPD.

Phosphorylated by MAPK2.

It localises to the nucleus. This Pneumocystis carinii protein is HMG-box protein STE11.